Here is a 786-residue protein sequence, read N- to C-terminus: Endonuclease MutS2 (786 aa).

335 to 342 (GPNTGGKT) serves as a coordination point for ATP. One can recognise a Smr domain in the interval 711-786 (LDLRGERFEN…GLGVTVVELK (76 aa)).

The protein belongs to the DNA mismatch repair MutS family. MutS2 subfamily. As to quaternary structure, homodimer. Binds to stalled ribosomes, contacting rRNA.

In terms of biological role, endonuclease that is involved in the suppression of homologous recombination and thus may have a key role in the control of bacterial genetic diversity. Its function is as follows. Acts as a ribosome collision sensor, splitting the ribosome into its 2 subunits. Detects stalled/collided 70S ribosomes which it binds and splits by an ATP-hydrolysis driven conformational change. Acts upstream of the ribosome quality control system (RQC), a ribosome-associated complex that mediates the extraction of incompletely synthesized nascent chains from stalled ribosomes and their subsequent degradation. Probably generates substrates for RQC. The protein is Endonuclease MutS2 of Bacillus cereus (strain ATCC 10987 / NRS 248).